Consider the following 422-residue polypeptide: Chorismate synthase (422 aa).

Residues Arg-43 and Arg-49 each contribute to the NADP(+) site. FMN contacts are provided by residues 143–145 (RSS), 264–265 (QA), Gly-309, 324–328 (KPIST), and Arg-350.

The protein belongs to the chorismate synthase family. Homotetramer. Requires FMNH2 as cofactor.

The enzyme catalyses 5-O-(1-carboxyvinyl)-3-phosphoshikimate = chorismate + phosphate. It participates in metabolic intermediate biosynthesis; chorismate biosynthesis; chorismate from D-erythrose 4-phosphate and phosphoenolpyruvate: step 7/7. Catalyzes the anti-1,4-elimination of the C-3 phosphate and the C-6 proR hydrogen from 5-enolpyruvylshikimate-3-phosphate (EPSP) to yield chorismate, which is the branch point compound that serves as the starting substrate for the three terminal pathways of aromatic amino acid biosynthesis. This reaction introduces a second double bond into the aromatic ring system. The polypeptide is Chorismate synthase (Corynebacterium jeikeium (strain K411)).